The chain runs to 79 residues: Defensin-like protein 3 (79 aa).

The first 29 residues, 1–29, serve as a signal peptide directing secretion; the sequence is MAKFASIVALLFAALVVFAAFEAPTVVEA. Disulfide bonds link cysteine 32/cysteine 79, cysteine 43/cysteine 64, cysteine 49/cysteine 73, and cysteine 53/cysteine 75.

It belongs to the DEFL family.

The protein localises to the secreted. Possesses antifungal activity sensitive to inorganic cations. The sequence is that of Defensin-like protein 3 (AFP3) from Raphanus sativus (Radish).